Consider the following 145-residue polypeptide: Protein SprT-like (145 aa).

A SprT-like domain is found at 5–140 (DYVREVSLAD…ACGRCHGRLI (136 aa)). A Zn(2+)-binding site is contributed by His64. Glu65 is an active-site residue. Residue His68 coordinates Zn(2+).

This sequence belongs to the SprT family. It depends on Zn(2+) as a cofactor.

Its subcellular location is the cytoplasm. In Streptococcus equi subsp. zooepidemicus (strain MGCS10565), this protein is Protein SprT-like.